We begin with the raw amino-acid sequence, 754 residues long: Lysyl oxidase homolog 3 (754 aa).

Positions 1–26 (MRAVSVWYCCPWGLLLLHCLCSFSVG) are cleaved as a signal peptide. SRCR domains follow at residues 45–146 (FRLA…VICK), 170–283 (VRLR…VSCV), 308–408 (VRLK…VRCN), and 418–526 (IRLS…VICS). Intrachain disulfides connect Cys71/Cys135, Cys84/Cys145, Cys115/Cys125, Cys202/Cys272, Cys215/Cys282, Cys249/Cys259, Cys333/Cys397, Cys346/Cys407, Cys377/Cys387, Cys447/Cys512, Cys460/Cys525, Cys493/Cys503, Cys555/Cys561, Cys607/Cys655, Cys639/Cys645, Cys667/Cys677, and Cys714/Cys728. Asn112 is a glycosylation site (N-linked (GlcNAc...) asparagine). Asn267 is a glycosylation site (N-linked (GlcNAc...) asparagine). N-linked (GlcNAc...) asparagine glycans are attached at residues Asn391 and Asn482. Residues 530-733 (SDLLLHSALV…WVHNCHIGDA (204 aa)) form a lysyl-oxidase like region. Cu cation-binding residues include His608, His610, and His612. A glycan (N-linked (GlcNAc...) asparagine) is linked at Asn626. Residues 635-671 (KASFCLEDTECQEDVSKRYECANFGEQGITVGCWDLY) constitute a cross-link (lysine tyrosylquinone (Lys-Tyr)). Tyr671 bears the 2',4',5'-topaquinone mark.

The protein belongs to the lysyl oxidase family. Cu cation serves as cofactor. Requires lysine tyrosylquinone residue as cofactor. The lysine tyrosylquinone cross-link (LTQ) is generated by condensation of the epsilon-amino group of a lysine with a topaquinone produced by oxidation of tyrosine. As to expression, expressed in palate: predominantly present in the palate mesenchyme and tongue (at protein level). In spine, expressed in the original intervertebral disk, cartilage primordia, anterior and posterior longitudinal ligaments, meninges of spinal cord, lung and heart. In eyes, strongly expressed in the skin of the eyelid and weakly expressed in the cornea and sclera. In lung, predominantly expressed in the pulmonary mesenchyme. In developing muscle, expressed at myofiber ends (at protein level).

The protein localises to the secreted. Its subcellular location is the extracellular space. The protein resides in the cytoplasm. It is found in the nucleus. It carries out the reaction L-lysyl-[protein] + O2 + H2O = (S)-2-amino-6-oxohexanoyl-[protein] + H2O2 + NH4(+). The enzyme catalyses N(6)-acetyl-L-lysyl-[protein] + O2 + H2O = acetamide + (S)-2-amino-6-oxohexanoyl-[protein] + H2O2. Functionally, protein-lysine 6-oxidase that mediates the oxidation of peptidyl lysine residues to allysine in target proteins. Catalyzes the post-translational oxidative deamination of peptidyl lysine residues in precursors of elastin and different types of collagens, a prerequisite in the formation of cross-links between collagens and elastin. Required for somite boundary formation by catalyzing oxidation of fibronectin (FN1), enhancing integrin signaling in myofibers and their adhesion to the myotendinous junction (MTJ). Acts as a regulator of inflammatory response by inhibiting differentiation of naive CD4(+) T-cells into T-helper Th17 or regulatory T-cells (Treg): acts by interacting with STAT3 in the nucleus and catalyzing both deacetylation and oxidation of lysine residues on STAT3, leading to disrupt STAT3 dimerization and inhibit STAT3 transcription activity. Oxidation of lysine residues to allysine on STAT3 preferentially takes place on lysine residues that are acetylated. Also able to catalyze deacetylation of lysine residues on STAT3. The sequence is that of Lysyl oxidase homolog 3 from Mus musculus (Mouse).